We begin with the raw amino-acid sequence, 60 residues long: Ribosome-inactivating protein dianthin-32 (60 aa).

The protein belongs to the ribosome-inactivating protein family. Type 1 RIP subfamily.

The catalysed reaction is Endohydrolysis of the N-glycosidic bond at one specific adenosine on the 28S rRNA.. Functionally, single-chain ribosome-inactivating protein. The sequence is that of Ribosome-inactivating protein dianthin-32 from Dianthus caryophyllus (Carnation).